The following is a 236-amino-acid chain: UPF0257 lipoprotein YnfC (236 aa).

The N-terminal stretch at 1–16 is a signal peptide; the sequence is MKKPLLLTLLCMILAG. The N-palmitoyl cysteine moiety is linked to residue C17. C17 carries the S-diacylglycerol cysteine lipid modification.

Belongs to the UPF0257 family.

It localises to the cell membrane. The protein is UPF0257 lipoprotein YnfC of Salmonella schwarzengrund (strain CVM19633).